The following is a 65-amino-acid chain: Large ribosomal subunit protein bL35 (65 aa).

It belongs to the bacterial ribosomal protein bL35 family.

This Wolbachia sp. subsp. Brugia malayi (strain TRS) protein is Large ribosomal subunit protein bL35.